Here is a 109-residue protein sequence, read N- to C-terminus: Prefoldin subunit 1 (109 aa).

The residue at position 2 (Ser-2) is an N-acetylserine.

This sequence belongs to the prefoldin subunit beta family. In terms of assembly, heterohexamer of two PFD-alpha type and four PFD-beta type subunits.

Its subcellular location is the cytoplasm. Its function is as follows. Binds specifically to cytosolic chaperonin (c-CPN) and transfers target proteins to it. Binds to nascent polypeptide chain and promotes folding in an environment in which there are many competing pathways for nonnative proteins. This is Prefoldin subunit 1 (PFD1) from Saccharomyces cerevisiae (strain ATCC 204508 / S288c) (Baker's yeast).